We begin with the raw amino-acid sequence, 543 residues long: Serendipity locus protein alpha (543 aa).

It localises to the cytoplasm. Its subcellular location is the cell membrane. Its function is as follows. Required for the cellularization of the syncytial blastoderm embryo. Involved in the localization of the actin filaments just prior to and during plasma membrane invagination. Sry-alpha together with nullo and bnk may provide auxiliary functions, by acting both to stabilize a large and dynamic microfilament structure and regulate its functions. In Drosophila subobscura (Fruit fly), this protein is Serendipity locus protein alpha (Sry-alpha).